The chain runs to 470 residues: UDP-glycosyltransferase 72D1 (470 aa).

UDP-alpha-D-glucose contacts are provided by residues Ser-276, 343–345 (APQ), 360–368 (HCGWSSALE), and 382–385 (YAEQ).

This sequence belongs to the UDP-glycosyltransferase family.

The chain is UDP-glycosyltransferase 72D1 (UGT72D1) from Arabidopsis thaliana (Mouse-ear cress).